The following is a 120-amino-acid chain: MFVNKKYTAKGKNLPSSPKKVRPIANNIRGKPYNEAIAILCSMPNKGAKLLGKVVKSAASNAMYHNRNLSEDMIFVKTVMVDDGRKRRSIWPRARGRADRLINRSCHIFVEVYEKMYGGE.

Positions 1 to 25 are disordered; that stretch reads MFVNKKYTAKGKNLPSSPKKVRPIA.

This sequence belongs to the universal ribosomal protein uL22 family. As to quaternary structure, part of the 50S ribosomal subunit.

In terms of biological role, this protein binds specifically to 23S rRNA; its binding is stimulated by other ribosomal proteins, e.g. L4, L17, and L20. It is important during the early stages of 50S assembly. It makes multiple contacts with different domains of the 23S rRNA in the assembled 50S subunit and ribosome. Its function is as follows. The globular domain of the protein is located near the polypeptide exit tunnel on the outside of the subunit, while an extended beta-hairpin is found that lines the wall of the exit tunnel in the center of the 70S ribosome. The chain is Large ribosomal subunit protein uL22 from Borrelia recurrentis (strain A1).